The primary structure comprises 193 residues: LOB domain-containing protein 12 (193 aa).

An LOB domain is found at 7-108; the sequence is SPCASCKLLR…MQLAVAQAEI (102 aa).

It belongs to the LOB domain-containing protein family. As to expression, expressed predominantly in roots, and at low levels in shoots, floral stems and open flowers.

This Arabidopsis thaliana (Mouse-ear cress) protein is LOB domain-containing protein 12 (LBD12).